The following is a 362-amino-acid chain: 3-dehydroquinate synthase (362 aa).

NAD(+) is bound by residues 71–76, 105–109, 129–130, Lys-142, Lys-151, and 169–172; these read DGEQYK, GVVGD, TT, and CLKT. Positions 184, 247, and 264 each coordinate Zn(2+).

Belongs to the sugar phosphate cyclases superfamily. Dehydroquinate synthase family. Requires Co(2+) as cofactor. Zn(2+) is required as a cofactor. NAD(+) serves as cofactor.

It localises to the cytoplasm. The catalysed reaction is 7-phospho-2-dehydro-3-deoxy-D-arabino-heptonate = 3-dehydroquinate + phosphate. Its pathway is metabolic intermediate biosynthesis; chorismate biosynthesis; chorismate from D-erythrose 4-phosphate and phosphoenolpyruvate: step 2/7. Catalyzes the conversion of 3-deoxy-D-arabino-heptulosonate 7-phosphate (DAHP) to dehydroquinate (DHQ). The protein is 3-dehydroquinate synthase of Escherichia coli (strain 55989 / EAEC).